The following is a 494-amino-acid chain: Flap endonuclease 1 (494 aa).

Residues Met1–Arg106 are N-domain. Position 34 (Asp34) interacts with Mg(2+). The DNA site is built by Arg47 and Arg72. Residues Asp88, Glu160, Glu162, Asp181, and Asp183 each contribute to the Mg(2+) site. Residues Ser124–Tyr253 are I-domain. Glu160 serves as a coordination point for DNA. The DNA site is built by Gly231 and Asp233. Asp233 serves as a coordination point for Mg(2+). The interaction with PCNA stretch occupies residues Ile330–Leu338. 2 disordered regions span residues Pro341–Thr382 and Leu395–Thr426. The segment covering Asp408–Thr426 has biased composition (basic and acidic residues).

Belongs to the XPG/RAD2 endonuclease family. FEN1 subfamily. As to quaternary structure, interacts with PCNA. Three molecules of FEN1 bind to one PCNA trimer with each molecule binding to one PCNA monomer. PCNA stimulates the nuclease activity without altering cleavage specificity. Mg(2+) is required as a cofactor. In terms of processing, phosphorylated. Phosphorylation upon DNA damage induces relocalization to the nuclear plasma.

It localises to the nucleus. It is found in the nucleolus. The protein localises to the nucleoplasm. The protein resides in the mitochondrion. Its function is as follows. Structure-specific nuclease with 5'-flap endonuclease and 5'-3' exonuclease activities involved in DNA replication and repair. During DNA replication, cleaves the 5'-overhanging flap structure that is generated by displacement synthesis when DNA polymerase encounters the 5'-end of a downstream Okazaki fragment. It enters the flap from the 5'-end and then tracks to cleave the flap base, leaving a nick for ligation. Also involved in the long patch base excision repair (LP-BER) pathway, by cleaving within the apurinic/apyrimidinic (AP) site-terminated flap. Acts as a genome stabilization factor that prevents flaps from equilibrating into structures that lead to duplications and deletions. Also possesses 5'-3' exonuclease activity on nicked or gapped double-stranded DNA, and exhibits RNase H activity. Also involved in replication and repair of rDNA and in repairing mitochondrial DNA. The polypeptide is Flap endonuclease 1 (Theileria parva (East coast fever infection agent)).